A 436-amino-acid polypeptide reads, in one-letter code: GTPase Der (436 aa).

2 EngA-type G domains span residues 4–167 (PTVA…PTEV) and 175–351 (IRFS…ESQN). GTP-binding positions include 10–17 (GRPNVGKS), 57–61 (DTGGI), 119–122 (NKVD), 181–188 (GRPNVGKS), 229–233 (DTAGM), and 294–297 (NKWD). The KH-like domain maps to 352 to 436 (RRISSAVLND…PIHLIARKRK (85 aa)).

The protein belongs to the TRAFAC class TrmE-Era-EngA-EngB-Septin-like GTPase superfamily. EngA (Der) GTPase family. Associates with the 50S ribosomal subunit.

Functionally, GTPase that plays an essential role in the late steps of ribosome biogenesis. The protein is GTPase Der of Streptococcus thermophilus (strain ATCC BAA-491 / LMD-9).